Consider the following 68-residue polypeptide: Large ribosomal subunit protein uL29 (68 aa).

It belongs to the universal ribosomal protein uL29 family.

This is Large ribosomal subunit protein uL29 from Acidiphilium cryptum (strain JF-5).